The following is a 99-amino-acid chain: Small ribosomal subunit protein bS20 (99 aa).

This sequence belongs to the bacterial ribosomal protein bS20 family.

Its function is as follows. Binds directly to 16S ribosomal RNA. The sequence is that of Small ribosomal subunit protein bS20 from Thermotoga neapolitana (strain ATCC 49049 / DSM 4359 / NBRC 107923 / NS-E).